Here is a 196-residue protein sequence, read N- to C-terminus: Peroxynitrite isomerase (196 aa).

The GXWXGXG motif lies at 46-52 (GVWRGRG). Position 186 (His-186) interacts with heme b.

It belongs to the nitrobindin family. Homodimer. Heme b is required as a cofactor.

The enzyme catalyses peroxynitrite = nitrate. Its pathway is nitrogen metabolism. Heme-binding protein able to scavenge peroxynitrite and to protect free L-tyrosine against peroxynitrite-mediated nitration, by acting as a peroxynitrite isomerase that converts peroxynitrite to nitrate. Therefore, this protein likely plays a role in peroxynitrite sensing and in the detoxification of reactive nitrogen and oxygen species (RNS and ROS, respectively). Is able to bind nitric oxide (NO) in vitro, but may act as a sensor of peroxynitrite levels in vivo. The sequence is that of Peroxynitrite isomerase from Salinispora tropica (strain ATCC BAA-916 / DSM 44818 / JCM 13857 / NBRC 105044 / CNB-440).